The sequence spans 510 residues: NAD(P)H-quinone oxidoreductase subunit 2 A, chloroplastic (510 aa).

A run of 14 helical transmembrane segments spans residues 31–51 (LIFP…IDLT), 57–77 (IPWL…ALLF), 99–119 (IFQF…VEYI), 124–144 (MAIT…MFLC), 149–169 (LITI…LSGY), 184–204 (LLMG…LYGL), 229–249 (ISIA…LAPF), 261–281 (PTPV…ALAT), 295–315 (WHLL…LIAI), 323–343 (MLAY…IVGD), 354–374 (YMLF…LFGL), 395–415 (ALSL…AGFF), 418–438 (LYLF…IGLL), and 484–504 (MIVC…IIAI).

It belongs to the complex I subunit 2 family. In terms of assembly, NDH is composed of at least 16 different subunits, 5 of which are encoded in the nucleus.

The protein resides in the plastid. Its subcellular location is the chloroplast thylakoid membrane. It carries out the reaction a plastoquinone + NADH + (n+1) H(+)(in) = a plastoquinol + NAD(+) + n H(+)(out). The catalysed reaction is a plastoquinone + NADPH + (n+1) H(+)(in) = a plastoquinol + NADP(+) + n H(+)(out). In terms of biological role, NDH shuttles electrons from NAD(P)H:plastoquinone, via FMN and iron-sulfur (Fe-S) centers, to quinones in the photosynthetic chain and possibly in a chloroplast respiratory chain. The immediate electron acceptor for the enzyme in this species is believed to be plastoquinone. Couples the redox reaction to proton translocation, and thus conserves the redox energy in a proton gradient. In Nicotiana tabacum (Common tobacco), this protein is NAD(P)H-quinone oxidoreductase subunit 2 A, chloroplastic.